The following is a 269-amino-acid chain: Signal recognition particle receptor subunit beta (269 aa).

The chain crosses the membrane as a helical span at residues 35-55 (LLSVAVAVLAVLLTLVFWKFI). GTP contacts are provided by residues 69 to 77 (GLCDSGKTL) and 90 to 93 (TQTS). Ser110 is modified (phosphoserine). Residue Gly118 coordinates GTP. A Phosphothreonine modification is found at Thr212. Ala246 serves as a coordination point for GTP.

This sequence belongs to the SRP receptor beta subunit family. As to quaternary structure, heterodimer with SRPRA.

It is found in the endoplasmic reticulum membrane. Its function is as follows. Component of the signal recognition particle (SRP) complex receptor (SR). Ensures, in conjunction with the SRP complex, the correct targeting of the nascent secretory proteins to the endoplasmic reticulum membrane system. May mediate the membrane association of SR. In Rattus norvegicus (Rat), this protein is Signal recognition particle receptor subunit beta (Srprb).